The chain runs to 152 residues: Histone H2B.1 (152 aa).

Over residues Met1–Pro28 the composition is skewed to basic and acidic residues. A disordered region spans residues Met1–Lys60. Lys7 and Lys37 each carry N6-acetyllysine. Residue Lys148 forms a Glycyl lysine isopeptide (Lys-Gly) (interchain with G-Cter in ubiquitin) linkage.

Belongs to the histone H2B family. The nucleosome is a histone octamer containing two molecules each of H2A, H2B, H3 and H4 assembled in one H3-H4 heterotetramer and two H2A-H2B heterodimers. The octamer wraps approximately 147 bp of DNA. In terms of processing, can be acetylated to form H2BK6ac and H2BK33ac. Monoubiquitinated to form H2BK143ub1; may give a specific tag for epigenetic transcriptional activation.

The protein resides in the nucleus. It localises to the chromosome. Its function is as follows. Core component of nucleosome. Nucleosomes wrap and compact DNA into chromatin, limiting DNA accessibility to the cellular machineries which require DNA as a template. Histones thereby play a central role in transcription regulation, DNA repair, DNA replication and chromosomal stability. DNA accessibility is regulated via a complex set of post-translational modifications of histones, also called histone code, and nucleosome remodeling. The sequence is that of Histone H2B.1 from Triticum aestivum (Wheat).